Reading from the N-terminus, the 381-residue chain is Alcohol dehydrogenase class-3 (381 aa).

Cys-49 lines the Zn(2+) pocket. His-50 contributes to the NAD(+) binding site. Thr-51 and His-71 together coordinate an alcohol. Zn(2+) contacts are provided by His-71, Glu-72, Cys-101, Cys-104, Cys-107, Cys-115, and Cys-179. Residues 204-209, Asp-228, Lys-233, Ile-274, 297-299, 322-324, and Arg-374 each bind NAD(+); these read GLGTVG, VGV, and TAF.

It belongs to the zinc-containing alcohol dehydrogenase family. Class-III subfamily. In terms of assembly, homodimer. The cofactor is Zn(2+). In terms of tissue distribution, expressed at low levels in the leaves.

The protein localises to the cytoplasm. It carries out the reaction a primary alcohol + NAD(+) = an aldehyde + NADH + H(+). The enzyme catalyses a secondary alcohol + NAD(+) = a ketone + NADH + H(+). It catalyses the reaction S-(hydroxymethyl)glutathione + NADP(+) = S-formylglutathione + NADPH + H(+). The catalysed reaction is S-(hydroxymethyl)glutathione + NAD(+) = S-formylglutathione + NADH + H(+). This Zea mays (Maize) protein is Alcohol dehydrogenase class-3 (FDH).